A 230-amino-acid polypeptide reads, in one-letter code: Ribonuclease 3 (230 aa).

The 124-residue stretch at aspartate 10–serine 133 folds into the RNase III domain. Glutamate 46 serves as a coordination point for Mg(2+). Aspartate 50 is a catalytic residue. Aspartate 119 and glutamate 122 together coordinate Mg(2+). Glutamate 122 is a catalytic residue. In terms of domain architecture, DRBM spans aspartate 161–glutamine 230.

It belongs to the ribonuclease III family. Homodimer. Requires Mg(2+) as cofactor.

Its subcellular location is the cytoplasm. The catalysed reaction is Endonucleolytic cleavage to 5'-phosphomonoester.. Its function is as follows. Digests double-stranded RNA. Involved in the processing of primary rRNA transcript to yield the immediate precursors to the large and small rRNAs (23S and 16S). Processes some mRNAs, and tRNAs when they are encoded in the rRNA operon. Processes pre-crRNA and tracrRNA of type II CRISPR loci if present in the organism. The chain is Ribonuclease 3 (rnc) from Acinetobacter baumannii (strain AB307-0294).